Consider the following 173-residue polypeptide: Phosphopantetheine adenylyltransferase (173 aa).

Serine 9 is a substrate binding site. ATP-binding positions include 9–10 (SF) and histidine 17. Positions 41, 73, and 87 each coordinate substrate. ATP is bound by residues 88–90 (GLR), glutamate 98, and 123–129 (YQHLSSS).

This sequence belongs to the bacterial CoaD family. Homohexamer. Requires Mg(2+) as cofactor.

The protein resides in the cytoplasm. It carries out the reaction (R)-4'-phosphopantetheine + ATP + H(+) = 3'-dephospho-CoA + diphosphate. It functions in the pathway cofactor biosynthesis; coenzyme A biosynthesis; CoA from (R)-pantothenate: step 4/5. Reversibly transfers an adenylyl group from ATP to 4'-phosphopantetheine, yielding dephospho-CoA (dPCoA) and pyrophosphate. The protein is Phosphopantetheine adenylyltransferase of Limosilactobacillus reuteri (strain DSM 20016) (Lactobacillus reuteri).